Consider the following 426-residue polypeptide: Histidine--tRNA ligase (426 aa).

It belongs to the class-II aminoacyl-tRNA synthetase family. As to quaternary structure, homodimer.

It localises to the cytoplasm. The enzyme catalyses tRNA(His) + L-histidine + ATP = L-histidyl-tRNA(His) + AMP + diphosphate + H(+). The sequence is that of Histidine--tRNA ligase from Pseudoalteromonas translucida (strain TAC 125).